The following is a 392-amino-acid chain: Solute carrier family 35 member B1 (392 aa).

The interval 1 to 40 (MSLTKKIKNEKSLKQEKQTDQLKSNLRNNNNNINNKSKPK) is disordered. Residues 7–20 (IKNEKSLKQEKQTD) are compositionally biased toward basic and acidic residues. Residues 25 to 35 (NLRNNNNNINN) show a composition bias toward low complexity. Transmembrane regions (helical) follow at residues 57–77 (ELFFIFCVGGIYIFYLLYGLV), 97–117 (AFLLALQCFFNMVSAWLVSLV), 124–144 (NTPFMKYGFVSMLLVISTFLS), 155–175 (TQVLAKSCKPIPVIFMGLLLF), 179–199 (YPFLKYIVVIVISLGISLFML), 215–235 (HLFGNFILFVSLMMDGVMGPF), 247–267 (ATSMMLNTNIWNLGLFSIMAF), 285–305 (VIKLILAFCITSAIGQQFIFL), and 341–361 (LQWAAICMVFGGLILDLYISY). The Di-lysine motif motif lies at 389–392 (KKSL).

This sequence belongs to the nucleotide-sugar transporter family. SLC35B subfamily.

It localises to the endoplasmic reticulum membrane. Functionally, probable sugar transporter. This Dictyostelium discoideum (Social amoeba) protein is Solute carrier family 35 member B1 (slc35b1).